Reading from the N-terminus, the 284-residue chain is Pantothenate synthetase (284 aa).

31 to 38 (MGNLHAGH) provides a ligand contact to ATP. His38 functions as the Proton donor in the catalytic mechanism. Gln62 provides a ligand contact to (R)-pantoate. Gln62 serves as a coordination point for beta-alanine. 150–153 (GKKD) provides a ligand contact to ATP. Residue Gln156 coordinates (R)-pantoate. ATP contacts are provided by residues Val179 and 187-190 (MSSR).

Belongs to the pantothenate synthetase family. As to quaternary structure, homodimer.

It localises to the cytoplasm. The catalysed reaction is (R)-pantoate + beta-alanine + ATP = (R)-pantothenate + AMP + diphosphate + H(+). Its pathway is cofactor biosynthesis; (R)-pantothenate biosynthesis; (R)-pantothenate from (R)-pantoate and beta-alanine: step 1/1. Functionally, catalyzes the condensation of pantoate with beta-alanine in an ATP-dependent reaction via a pantoyl-adenylate intermediate. This Xanthomonas campestris pv. campestris (strain 8004) protein is Pantothenate synthetase.